The following is a 205-amino-acid chain: Thiamine-phosphate synthase (205 aa).

4-amino-2-methyl-5-(diphosphooxymethyl)pyrimidine-binding positions include 34–38 and asparagine 66; that span reads QLRCK. Residues aspartate 67 and aspartate 86 each contribute to the Mg(2+) site. Residue serine 105 participates in 4-amino-2-methyl-5-(diphosphooxymethyl)pyrimidine binding. Position 131–133 (131–133) interacts with 2-[(2R,5Z)-2-carboxy-4-methylthiazol-5(2H)-ylidene]ethyl phosphate; sequence TTT. Position 134 (lysine 134) interacts with 4-amino-2-methyl-5-(diphosphooxymethyl)pyrimidine. Glycine 163 contacts 2-[(2R,5Z)-2-carboxy-4-methylthiazol-5(2H)-ylidene]ethyl phosphate.

Belongs to the thiamine-phosphate synthase family. Mg(2+) serves as cofactor.

It carries out the reaction 2-[(2R,5Z)-2-carboxy-4-methylthiazol-5(2H)-ylidene]ethyl phosphate + 4-amino-2-methyl-5-(diphosphooxymethyl)pyrimidine + 2 H(+) = thiamine phosphate + CO2 + diphosphate. It catalyses the reaction 2-(2-carboxy-4-methylthiazol-5-yl)ethyl phosphate + 4-amino-2-methyl-5-(diphosphooxymethyl)pyrimidine + 2 H(+) = thiamine phosphate + CO2 + diphosphate. The catalysed reaction is 4-methyl-5-(2-phosphooxyethyl)-thiazole + 4-amino-2-methyl-5-(diphosphooxymethyl)pyrimidine + H(+) = thiamine phosphate + diphosphate. The protein operates within cofactor biosynthesis; thiamine diphosphate biosynthesis; thiamine phosphate from 4-amino-2-methyl-5-diphosphomethylpyrimidine and 4-methyl-5-(2-phosphoethyl)-thiazole: step 1/1. Its function is as follows. Condenses 4-methyl-5-(beta-hydroxyethyl)thiazole monophosphate (THZ-P) and 2-methyl-4-amino-5-hydroxymethyl pyrimidine pyrophosphate (HMP-PP) to form thiamine monophosphate (TMP). The sequence is that of Thiamine-phosphate synthase from Neisseria gonorrhoeae (strain ATCC 700825 / FA 1090).